The chain runs to 307 residues: uncharacterized protein (307 aa).

This is an uncharacterized protein from Caenorhabditis elegans.